The sequence spans 355 residues: Fe-S cluster assembly protein DRE2 (355 aa).

The segment at 23 to 156 (TSFNPRTLLL…KPDYSASVAV (134 aa)) is N-terminal SAM-like domain. Positions 157–247 (PLRLRRKDNS…EDTLLTEEDM (91 aa)) are linker. The tract at residues 189-214 (RKSVDMTDDVPEKDVPKVDSPKNDAP) is disordered. A compositionally biased stretch (basic and acidic residues) spans 190-213 (KSVDMTDDVPEKDVPKVDSPKNDA). The [2Fe-2S] cluster site is built by cysteine 257, cysteine 268, cysteine 271, and cysteine 273. The fe-S binding site A stretch occupies residues 257–273 (CAPRAGKRRRACKDCTC). [4Fe-4S] cluster is bound by residues cysteine 318, cysteine 321, cysteine 329, and cysteine 332. 2 short sequence motifs (cx2C motif) span residues 318–321 (CGNC) and 329–332 (CDGC). Residues 318–332 (CGNCSLGDAFRCDGC) are fe-S binding site B.

This sequence belongs to the anamorsin family. In terms of assembly, monomer. Interacts with TAH18. Interacts with MIA40. [2Fe-2S] cluster serves as cofactor. It depends on [4Fe-4S] cluster as a cofactor.

The protein resides in the cytoplasm. The protein localises to the mitochondrion intermembrane space. Component of the cytosolic iron-sulfur (Fe-S) protein assembly (CIA) machinery required for the maturation of extramitochondrial Fe-S proteins. Part of an electron transfer chain functioning in an early step of cytosolic Fe-S biogenesis, facilitating the de novo assembly of a [4Fe-4S] cluster on the scaffold complex CFD1-NBP35. Electrons are transferred to DRE2 from NADPH via the FAD- and FMN-containing protein TAH18. TAH18-DRE2 are also required for the assembly of the diferric tyrosyl radical cofactor of ribonucleotide reductase (RNR), probably by providing electrons for reduction during radical cofactor maturation in the catalytic small subunit RNR2. The chain is Fe-S cluster assembly protein DRE2 from Botryotinia fuckeliana (strain B05.10) (Noble rot fungus).